Here is a 106-residue protein sequence, read N- to C-terminus: Nucleoid-associated protein XCV1128 (106 aa).

Positions 81–106 (IDAESKDRMGSATAGMQLPPGMKLPF) are disordered.

It belongs to the YbaB/EbfC family. As to quaternary structure, homodimer.

It is found in the cytoplasm. Its subcellular location is the nucleoid. Functionally, binds to DNA and alters its conformation. May be involved in regulation of gene expression, nucleoid organization and DNA protection. The chain is Nucleoid-associated protein XCV1128 from Xanthomonas euvesicatoria pv. vesicatoria (strain 85-10) (Xanthomonas campestris pv. vesicatoria).